Consider the following 366-residue polypeptide: NADH-quinone oxidoreductase subunit D (366 aa).

This sequence belongs to the complex I 49 kDa subunit family. In terms of assembly, NDH-1 is composed of 14 different subunits. Subunits NuoB, C, D, E, F, and G constitute the peripheral sector of the complex.

Its subcellular location is the cell membrane. It carries out the reaction a quinone + NADH + 5 H(+)(in) = a quinol + NAD(+) + 4 H(+)(out). Functionally, NDH-1 shuttles electrons from NADH, via FMN and iron-sulfur (Fe-S) centers, to quinones in the respiratory chain. The immediate electron acceptor for the enzyme in this species is believed to be a menaquinone. Couples the redox reaction to proton translocation (for every two electrons transferred, four hydrogen ions are translocated across the cytoplasmic membrane), and thus conserves the redox energy in a proton gradient. The chain is NADH-quinone oxidoreductase subunit D from Bacillus anthracis.